We begin with the raw amino-acid sequence, 146 residues long: Cyanate hydratase (146 aa).

Catalysis depends on residues arginine 87, glutamate 90, and serine 113.

Belongs to the cyanase family.

It carries out the reaction cyanate + hydrogencarbonate + 3 H(+) = NH4(+) + 2 CO2. In terms of biological role, catalyzes the reaction of cyanate with bicarbonate to produce ammonia and carbon dioxide. The chain is Cyanate hydratase from Trichormus variabilis (strain ATCC 29413 / PCC 7937) (Anabaena variabilis).